The chain runs to 116 residues: Protein MGF 110-2L (116 aa).

The signal sequence occupies residues 1–19 (MRFFSYLGLLLAGLASLAS).

It belongs to the asfivirus MGF 110 family.

Plays a role in virus cell tropism, and may be required for efficient virus replication in macrophages. The chain is Protein MGF 110-2L from Ornithodoros (relapsing fever ticks).